The sequence spans 122 residues: Small ribosomal subunit protein uS13 (122 aa).

The disordered stretch occupies residues 97 to 122; the sequence is PVRGQRTKTNARTRKGPARTVAGKKK.

It belongs to the universal ribosomal protein uS13 family. Part of the 30S ribosomal subunit. Forms a loose heterodimer with protein S19. Forms two bridges to the 50S subunit in the 70S ribosome.

In terms of biological role, located at the top of the head of the 30S subunit, it contacts several helices of the 16S rRNA. In the 70S ribosome it contacts the 23S rRNA (bridge B1a) and protein L5 of the 50S subunit (bridge B1b), connecting the 2 subunits; these bridges are implicated in subunit movement. Contacts the tRNAs in the A and P-sites. The sequence is that of Small ribosomal subunit protein uS13 from Pelobacter propionicus (strain DSM 2379 / NBRC 103807 / OttBd1).